The following is a 219-amino-acid chain: Probable nicotinate-nucleotide adenylyltransferase (219 aa).

This sequence belongs to the NadD family.

The catalysed reaction is nicotinate beta-D-ribonucleotide + ATP + H(+) = deamido-NAD(+) + diphosphate. It functions in the pathway cofactor biosynthesis; NAD(+) biosynthesis; deamido-NAD(+) from nicotinate D-ribonucleotide: step 1/1. In terms of biological role, catalyzes the reversible adenylation of nicotinate mononucleotide (NaMN) to nicotinic acid adenine dinucleotide (NaAD). The sequence is that of Probable nicotinate-nucleotide adenylyltransferase from Chromohalobacter salexigens (strain ATCC BAA-138 / DSM 3043 / CIP 106854 / NCIMB 13768 / 1H11).